A 308-amino-acid polypeptide reads, in one-letter code: Prephenate dehydratase (308 aa).

A Prephenate dehydratase domain is found at 3 to 187 (RITYLGPEGT…AHTRFVLVGR (185 aa)). The region spanning 201–278 (SVVLGLGNVP…EDVRYLGSWP (78 aa)) is the ACT domain.

As to quaternary structure, homodimer.

The enzyme catalyses prephenate + H(+) = 3-phenylpyruvate + CO2 + H2O. It participates in amino-acid biosynthesis; L-phenylalanine biosynthesis; phenylpyruvate from prephenate: step 1/1. This Mycobacteroides abscessus (strain ATCC 19977 / DSM 44196 / CCUG 20993 / CIP 104536 / JCM 13569 / NCTC 13031 / TMC 1543 / L948) (Mycobacterium abscessus) protein is Prephenate dehydratase (pheA).